The chain runs to 793 residues: DnaJ homolog subfamily C member 10 (793 aa).

Positions 1-32 are cleaved as a signal peptide; it reads MGVWLSKDDYIRDLKRIILCFLIVYMAILVGT. A J domain is found at 35 to 100; it reads DFYSLLGVSK…DLRKKYDKYG (66 aa). Residues 130-232 form the Thioredoxin 1 domain; it reads EIITLERREF…ESLVSFAMQH (103 aa). Cysteine 158 and cysteine 161 are disulfide-bonded. 2 trxb regions span residues 235 to 350 and 348 to 463; these read STVT…LPDF and PDFE…PQNF. Thioredoxin domains lie at 454 to 553, 557 to 662, and 671 to 778; these read HVTT…IEDL, SVVS…SLRI, and VSTG…INEK. The cysteines at positions 480 and 483 are disulfide-linked. N-linked (GlcNAc...) asparagine glycosylation occurs at asparagine 530. 2 disulfide bridges follow: cysteine 588-cysteine 591 and cysteine 700-cysteine 703. Residues 790–793 carry the Prevents secretion from ER motif; sequence KDEL.

Interacts with HSPA5 (via its J domain). Interacts with EDEM1.

The protein localises to the endoplasmic reticulum lumen. Its function is as follows. Endoplasmic reticulum disulfide reductase involved both in the correct folding of proteins and degradation of misfolded proteins. Required for efficient folding of proteins in the endoplasmic reticulum by catalyzing the removal of non-native disulfide bonds formed during the folding of proteins, such as LDLR. Also involved in endoplasmic reticulum-associated degradation (ERAD) by reducing incorrect disulfide bonds in misfolded glycoproteins recognized by EDEM1. Interaction with HSPA5 is required its activity, not for the disulfide reductase activity, but to facilitate the release of DNAJC10 from its substrate. Promotes apoptotic signaling pathway in response to endoplasmic reticulum stress. In Pongo abelii (Sumatran orangutan), this protein is DnaJ homolog subfamily C member 10 (DNAJC10).